Consider the following 90-residue polypeptide: Small ribosomal subunit protein uS15c (90 aa).

This sequence belongs to the universal ribosomal protein uS15 family. In terms of assembly, part of the 30S ribosomal subunit.

Its subcellular location is the plastid. It localises to the chloroplast. The sequence is that of Small ribosomal subunit protein uS15c (rps15) from Dioscorea elephantipes (Elephant's foot yam).